Reading from the N-terminus, the 259-residue chain is Flagellar L-ring protein (259 aa).

Positions 1-15 are cleaved as a signal peptide; that stretch reads MKRISLIALVTIMSG. The N-palmitoyl cysteine moiety is linked to residue Cys16. Cys16 carries S-diacylglycerol cysteine lipidation.

The protein belongs to the FlgH family. As to quaternary structure, the basal body constitutes a major portion of the flagellar organelle and consists of four rings (L,P,S, and M) mounted on a central rod.

The protein localises to the cell outer membrane. It localises to the bacterial flagellum basal body. In terms of biological role, assembles around the rod to form the L-ring and probably protects the motor/basal body from shearing forces during rotation. This is Flagellar L-ring protein from Vibrio vulnificus (strain CMCP6).